The following is a 966-amino-acid chain: MATIELHAWYRQYRKLKEEAADAILLFRFGDFYETFDDDAKLIAELLDITLTRKEYAVDKRLPKDQQKLYAPMAGMPYHAVDRYVSELIARGYRVAIAEQLSETEAMRNDTRPRSVYAAGLTPVESSGKMVQRAIVRVITPGTVIDPAMLPDRTNNYLAAVIVEQGKVGLAYADLSTGEFAAAEFTDARALMQLQAELARLSPAEVLVPDDEALRLPNLEPVQARLSQDLAPLTKEEREALLPHERVARRLEGASAASWTQGYVTEWPLWRWELATTTEVLCEHLALPSLAVCGLDGRPLATRAAGALLQYAQVTQRQRVSQLRALRVYHTGAYMLLDPQTRRNLELLESGGRQGAKASLIAVLDRTCTAMGARLLRRWITQPLIVIEPLQVRQHAVARLVAETMARLEVRSALADLPDMERALNRIAQGITVATPRDMTQLRAALRKLPAVAQAVQALLPDLLAAEMPGEPPLVFDVCADVLDLLERALDDDPPALLGSSNYLRAAEEGGERPRRVIRPGFDQRLDALIRASRHAQEFIDRLESKERERTGIRSLKVGYNQVFGYYIEISRAVDAKLIPAHYERKQTLVNAERYVTEELKYYEGLLSDARLKLVDLERDIFQRLCDELQPHLDRLRATIAAVARIDALAALAEVAVRGRYVQPRLRTDRVLRIKQGRHPVVERTLSEPFIGNDIDLDGEQAQILIITGPNMAGKSTFLRQVALITLMAQIGSFVPADEAEIGLVDRIFTRIGAQDDIATGQSTFMVEMTETAALLMQSTPRSLIILDEVGRGTSTYDGMAIARAVVEYIHDHPRLGCRTLFATHYHELIALERELPRVRNYHMAAVERDGRVVFLHELRPGGADRSYGIHVAELAGIPPEVIRRASALLADLEGQRPPSSPAQPPAPPAPVVVPAQETGQGMQLSFFDLAPHPVVEYLRRLRIEELTPLEALNRLAELQRLAGQG.

709–716 provides a ligand contact to ATP; it reads GPNMAGKS. The tract at residues 894 to 914 is disordered; sequence EGQRPPSSPAQPPAPPAPVVV. Positions 899 to 912 are enriched in pro residues; that stretch reads PSSPAQPPAPPAPV.

Belongs to the DNA mismatch repair MutS family.

In terms of biological role, this protein is involved in the repair of mismatches in DNA. It is possible that it carries out the mismatch recognition step. This protein has a weak ATPase activity. The sequence is that of DNA mismatch repair protein MutS from Chloroflexus aurantiacus (strain ATCC 29366 / DSM 635 / J-10-fl).